A 504-amino-acid chain; its full sequence is ATP synthase subunit alpha (504 aa).

170–177 (GDRQTGKT) is an ATP binding site.

Belongs to the ATPase alpha/beta chains family. F-type ATPases have 2 components, CF(1) - the catalytic core - and CF(0) - the membrane proton channel. CF(1) has five subunits: alpha(3), beta(3), gamma(1), delta(1), epsilon(1). CF(0) has three main subunits: a(1), b(2) and c(9-12). The alpha and beta chains form an alternating ring which encloses part of the gamma chain. CF(1) is attached to CF(0) by a central stalk formed by the gamma and epsilon chains, while a peripheral stalk is formed by the delta and b chains.

The protein localises to the cell membrane. The catalysed reaction is ATP + H2O + 4 H(+)(in) = ADP + phosphate + 5 H(+)(out). Its function is as follows. Produces ATP from ADP in the presence of a proton gradient across the membrane. The alpha chain is a regulatory subunit. The protein is ATP synthase subunit alpha of Shouchella clausii (strain KSM-K16) (Alkalihalobacillus clausii).